The following is a 639-amino-acid chain: Chaperone protein DnaK (639 aa).

Residue Thr-198 is modified to Phosphothreonine; by autocatalysis. The span at 603-618 (AKAQTQGGAQEGAAKQ) shows a compositional bias: low complexity. The interval 603–639 (AKAQTQGGAQEGAAKQSNATADDVVDAEFEEVKDDKK) is disordered. The span at 625–639 (DVVDAEFEEVKDDKK) shows a compositional bias: acidic residues.

The protein belongs to the heat shock protein 70 family.

In terms of biological role, acts as a chaperone. This chain is Chaperone protein DnaK, found in Shewanella sp. (strain ANA-3).